The chain runs to 644 residues: Threonine--tRNA ligase (644 aa).

Residues 1–61 (MPDIQLPDGS…DQDAEVAIVT (61 aa)) form the TGS domain. The tract at residues 242-535 (DHRRIGTELE…LIEHYEGKFP (294 aa)) is catalytic. Zn(2+) is bound by residues Cys-335, His-386, and His-512.

The protein belongs to the class-II aminoacyl-tRNA synthetase family. Homodimer. Zn(2+) serves as cofactor.

Its subcellular location is the cytoplasm. It catalyses the reaction tRNA(Thr) + L-threonine + ATP = L-threonyl-tRNA(Thr) + AMP + diphosphate + H(+). Catalyzes the attachment of threonine to tRNA(Thr) in a two-step reaction: L-threonine is first activated by ATP to form Thr-AMP and then transferred to the acceptor end of tRNA(Thr). Also edits incorrectly charged L-seryl-tRNA(Thr). This chain is Threonine--tRNA ligase, found in Acidithiobacillus ferrooxidans (strain ATCC 23270 / DSM 14882 / CIP 104768 / NCIMB 8455) (Ferrobacillus ferrooxidans (strain ATCC 23270)).